We begin with the raw amino-acid sequence, 662 residues long: UvrABC system protein B (662 aa).

One can recognise a Helicase ATP-binding domain in the interval Asp-31 to Arg-188. Gly-44–Thr-51 lines the ATP pocket. The Beta-hairpin motif lies at Tyr-97–Val-120. The region spanning Gln-435–Ile-601 is the Helicase C-terminal domain. Residues Lys-626–Leu-661 enclose the UVR domain.

It belongs to the UvrB family. Forms a heterotetramer with UvrA during the search for lesions. Interacts with UvrC in an incision complex.

The protein localises to the cytoplasm. In terms of biological role, the UvrABC repair system catalyzes the recognition and processing of DNA lesions. A damage recognition complex composed of 2 UvrA and 2 UvrB subunits scans DNA for abnormalities. Upon binding of the UvrA(2)B(2) complex to a putative damaged site, the DNA wraps around one UvrB monomer. DNA wrap is dependent on ATP binding by UvrB and probably causes local melting of the DNA helix, facilitating insertion of UvrB beta-hairpin between the DNA strands. Then UvrB probes one DNA strand for the presence of a lesion. If a lesion is found the UvrA subunits dissociate and the UvrB-DNA preincision complex is formed. This complex is subsequently bound by UvrC and the second UvrB is released. If no lesion is found, the DNA wraps around the other UvrB subunit that will check the other stand for damage. This is UvrABC system protein B from Streptococcus pneumoniae (strain Taiwan19F-14).